Reading from the N-terminus, the 366-residue chain is Mitogen-activated protein kinase p38a (366 aa).

In terms of domain architecture, Protein kinase spans 25–312; that stretch reads YQDLQPVGSG…AEEALSHPYL (288 aa). Residues 31 to 39 and Lys-54 contribute to the ATP site; that span reads VGSGAYGQV. Asp-154 (proton acceptor) is an active-site residue. At Thr-184 the chain carries Phosphothreonine. Residues 184-186 carry the TXY motif; that stretch reads TGY. Tyr-186 is subject to Phosphotyrosine.

This sequence belongs to the protein kinase superfamily. CMGC Ser/Thr protein kinase family. MAP kinase subfamily. Mg(2+) is required as a cofactor. In terms of processing, dually phosphorylated on Thr-184 and Tyr-186, which activates the enzyme.

It localises to the nucleus. It carries out the reaction L-seryl-[protein] + ATP = O-phospho-L-seryl-[protein] + ADP + H(+). The enzyme catalyses L-threonyl-[protein] + ATP = O-phospho-L-threonyl-[protein] + ADP + H(+). Activated by threonine and tyrosine phosphorylation by Mkk3 in response to environmental stress. Its function is as follows. Kinase involved in a signal transduction pathway. May down-regulate insect immunity gene expression after prolonged infection. This is Mitogen-activated protein kinase p38a from Drosophila melanogaster (Fruit fly).